A 137-amino-acid polypeptide reads, in one-letter code: Large-conductance mechanosensitive channel (137 aa).

2 helical membrane passes run 10 to 30 (FAMR…AAFG) and 76 to 96 (GAFI…FMAI).

Belongs to the MscL family. Homopentamer.

Its subcellular location is the cell inner membrane. Channel that opens in response to stretch forces in the membrane lipid bilayer. May participate in the regulation of osmotic pressure changes within the cell. This is Large-conductance mechanosensitive channel from Pectobacterium carotovorum subsp. carotovorum (strain PC1).